A 475-amino-acid polypeptide reads, in one-letter code: Putative aldehyde dehydrogenase (475 aa).

Residues 146–147 (WN) and 223–224 (GS) contribute to the NAD(+) site. The active-site Proton acceptor is the E245. L246 provides a ligand contact to NAD(+). C279 acts as the Nucleophile in catalysis. E379 contributes to the NAD(+) binding site.

It belongs to the aldehyde dehydrogenase family.

The catalysed reaction is an aldehyde + NAD(+) + H2O = a carboxylate + NADH + 2 H(+). This chain is Putative aldehyde dehydrogenase, found in Staphylococcus aureus (strain MSSA476).